A 240-amino-acid polypeptide reads, in one-letter code: MADDWESAADSEIILQNAASTVNKWEGEDDDDDVKESWEDEEEKKDEENEKPTITDVPVKTKPSKALKAKLEEQARLEEEKEAKRLASLTPEEKLAEKLRLQKIQEDSDLNHALDTFGVTRAETNGNGLDSFNPETKEQFKEFGSALSWKVGQYRESAEFPQFVEDLVRGLCIHLSAADIKKVKMSVEILHSEKLKMEKAIAKKAAGKNKGKATLRTESDDIDDYKKYGNDFSEDYDDFM.

The disordered stretch occupies residues 1 to 66 (MADDWESAAD…VPVKTKPSKA (66 aa)). Over residues 27–45 (GEDDDDDVKESWEDEEEKK) the composition is skewed to acidic residues.

The protein belongs to the eIF-3 subunit J family. Component of the eukaryotic translation initiation factor 3 (eIF-3) complex. The eIF-3 complex interacts with pix.

The protein localises to the cytoplasm. Its function is as follows. Component of the eukaryotic translation initiation factor 3 (eIF-3) complex, which is involved in protein synthesis of a specialized repertoire of mRNAs and, together with other initiation factors, stimulates binding of mRNA and methionyl-tRNAi to the 40S ribosome. The eIF-3 complex specifically targets and initiates translation of a subset of mRNAs involved in cell proliferation. This chain is Eukaryotic translation initiation factor 3 subunit J, found in Drosophila persimilis (Fruit fly).